Consider the following 80-residue polypeptide: Large ribosomal subunit protein bL31B (80 aa).

This sequence belongs to the bacterial ribosomal protein bL31 family. Type B subfamily. Part of the 50S ribosomal subunit.

This chain is Large ribosomal subunit protein bL31B, found in Stenotrophomonas maltophilia (strain K279a).